Reading from the N-terminus, the 212-residue chain is 2,3-bisphosphoglycerate-dependent phosphoglycerate mutase (212 aa).

Substrate-binding positions include 9–16 (RHGQSEWN), 22–23 (TG), R61, 88–91 (ERDY), K99, 115–116 (RR), and 159–160 (GN). Catalysis depends on H10, which acts as the Tele-phosphohistidine intermediate. E88 acts as the Proton donor/acceptor in catalysis.

This sequence belongs to the phosphoglycerate mutase family. BPG-dependent PGAM subfamily. As to quaternary structure, homodimer.

The catalysed reaction is (2R)-2-phosphoglycerate = (2R)-3-phosphoglycerate. It participates in carbohydrate degradation; glycolysis; pyruvate from D-glyceraldehyde 3-phosphate: step 3/5. Catalyzes the interconversion of 2-phosphoglycerate and 3-phosphoglycerate. The chain is 2,3-bisphosphoglycerate-dependent phosphoglycerate mutase from Methylorubrum extorquens (strain CM4 / NCIMB 13688) (Methylobacterium extorquens).